The sequence spans 121 residues: Flagellar protein FliT (121 aa).

Residues 1 to 50 (MNNAPHLYFAWQQLVEKSQLMLRLATEEQWDELITSEMAYVNAVQEIAHL) are required for homodimerization. The interval 60 to 98 (MQEQLRPMLRLILDNESKVKQLLQIRMDELAKLVGQSSV) is fliD binding.

The protein belongs to the FliT family. In terms of assembly, homodimer. Interacts with FliD and FlhC.

It is found in the cytoplasm. Its subcellular location is the cytosol. Dual-function protein that regulates the transcription of class 2 flagellar operons and that also acts as an export chaperone for the filament-capping protein FliD. As a transcriptional regulator, acts as an anti-FlhDC factor; it directly binds FlhC, thus inhibiting the binding of the FlhC/FlhD complex to class 2 promoters, resulting in decreased expression of class 2 flagellar operons. As a chaperone, effects FliD transition to the membrane by preventing its premature polymerization, and by directing it to the export apparatus. The polypeptide is Flagellar protein FliT (Escherichia coli (strain 55989 / EAEC)).